We begin with the raw amino-acid sequence, 127 residues long: uncharacterized protein (127 aa).

A helical transmembrane segment spans residues 84–103 (IALLSLFISLSIRITCFPFF).

It localises to the membrane. This is an uncharacterized protein from Saccharomyces cerevisiae (strain ATCC 204508 / S288c) (Baker's yeast).